The primary structure comprises 215 residues: LexA repressor (215 aa).

The H-T-H motif DNA-binding region spans 28-48; the sequence is RAEIAAELGFSSPNAAEEHLR. Active-site for autocatalytic cleavage activity residues include Ser-133 and Lys-170.

It belongs to the peptidase S24 family. As to quaternary structure, homodimer.

The enzyme catalyses Hydrolysis of Ala-|-Gly bond in repressor LexA.. Its function is as follows. Represses a number of genes involved in the response to DNA damage (SOS response), including recA and lexA. In the presence of single-stranded DNA, RecA interacts with LexA causing an autocatalytic cleavage which disrupts the DNA-binding part of LexA, leading to derepression of the SOS regulon and eventually DNA repair. This Burkholderia ambifaria (strain MC40-6) protein is LexA repressor.